A 143-amino-acid chain; its full sequence is SsrA-binding protein (143 aa).

Belongs to the SmpB family.

It is found in the cytoplasm. Its function is as follows. Required for rescue of stalled ribosomes mediated by trans-translation. Binds to transfer-messenger RNA (tmRNA), required for stable association of tmRNA with ribosomes. tmRNA and SmpB together mimic tRNA shape, replacing the anticodon stem-loop with SmpB. tmRNA is encoded by the ssrA gene; the 2 termini fold to resemble tRNA(Ala) and it encodes a 'tag peptide', a short internal open reading frame. During trans-translation Ala-aminoacylated tmRNA acts like a tRNA, entering the A-site of stalled ribosomes, displacing the stalled mRNA. The ribosome then switches to translate the ORF on the tmRNA; the nascent peptide is terminated with the 'tag peptide' encoded by the tmRNA and targeted for degradation. The ribosome is freed to recommence translation, which seems to be the essential function of trans-translation. The chain is SsrA-binding protein from Mycoplasmopsis synoviae (strain 53) (Mycoplasma synoviae).